Here is a 502-residue protein sequence, read N- to C-terminus: D-alanine--D-alanyl carrier protein ligase (502 aa).

150–151 is a binding site for ATP; sequence TS. Aspartate 195 provides a ligand contact to D-alanine. 290–295 is a binding site for ATP; the sequence is NTYGPT. Valine 299 contributes to the D-alanine binding site. Aspartate 381 and lysine 490 together coordinate ATP. Lysine 490 contacts D-alanine.

It belongs to the ATP-dependent AMP-binding enzyme family. DltA subfamily.

The protein localises to the cytoplasm. The enzyme catalyses holo-[D-alanyl-carrier protein] + D-alanine + ATP = D-alanyl-[D-alanyl-carrier protein] + AMP + diphosphate. It participates in cell wall biogenesis; lipoteichoic acid biosynthesis. Functionally, catalyzes the first step in the D-alanylation of lipoteichoic acid (LTA), the activation of D-alanine and its transfer onto the D-alanyl carrier protein (Dcp) DltC. In an ATP-dependent two-step reaction, forms a high energy D-alanyl-AMP intermediate, followed by transfer of the D-alanyl residue as a thiol ester to the phosphopantheinyl prosthetic group of the Dcp. D-alanylation of LTA plays an important role in modulating the properties of the cell wall in Gram-positive bacteria, influencing the net charge of the cell wall. The chain is D-alanine--D-alanyl carrier protein ligase from Bacillus licheniformis (strain ATCC 14580 / DSM 13 / JCM 2505 / CCUG 7422 / NBRC 12200 / NCIMB 9375 / NCTC 10341 / NRRL NRS-1264 / Gibson 46).